A 131-amino-acid polypeptide reads, in one-letter code: uncharacterized protein (131 aa).

This is an uncharacterized protein from Bacillus subtilis (strain 168).